The chain runs to 517 residues: GMP synthase [glutamine-hydrolyzing] (517 aa).

A Glutamine amidotransferase type-1 domain is found at 9–199 (RILILDFGSQ…VLGVCGCERL (191 aa)). Cysteine 86 acts as the Nucleophile in catalysis. Active-site residues include histidine 173 and glutamate 175. In terms of domain architecture, GMPS ATP-PPase spans 200–392 (WTSESIIEDA…LGLPYNMLYR (193 aa)). An ATP-binding site is contributed by 227–233 (SGGVDSS).

In terms of assembly, homodimer.

The enzyme catalyses XMP + L-glutamine + ATP + H2O = GMP + L-glutamate + AMP + diphosphate + 2 H(+). It participates in purine metabolism; GMP biosynthesis; GMP from XMP (L-Gln route): step 1/1. Catalyzes the synthesis of GMP from XMP. The protein is GMP synthase [glutamine-hydrolyzing] of Vibrio cholerae serotype O1 (strain ATCC 39541 / Classical Ogawa 395 / O395).